The following is a 494-amino-acid chain: ATP synthase subunit beta (494 aa).

177 to 184 contributes to the ATP binding site; the sequence is GGAGVGKT.

Belongs to the ATPase alpha/beta chains family. In terms of assembly, F-type ATPases have 2 components, CF(1) - the catalytic core - and CF(0) - the membrane proton channel. CF(1) has five subunits: alpha(3), beta(3), gamma(1), delta(1), epsilon(1). CF(0) has three main subunits: a(1), b(2) and c(9-12). The alpha and beta chains form an alternating ring which encloses part of the gamma chain. CF(1) is attached to CF(0) by a central stalk formed by the gamma and epsilon chains, while a peripheral stalk is formed by the delta and b chains.

It localises to the cell membrane. It catalyses the reaction ATP + H2O + 4 H(+)(in) = ADP + phosphate + 5 H(+)(out). Its function is as follows. Produces ATP from ADP in the presence of a proton gradient across the membrane. The catalytic sites are hosted primarily by the beta subunits. This chain is ATP synthase subunit beta, found in Bifidobacterium adolescentis (strain ATCC 15703 / DSM 20083 / NCTC 11814 / E194a).